A 350-amino-acid chain; its full sequence is UDP-3-O-acylglucosamine N-acyltransferase (350 aa).

Catalysis depends on H244, which acts as the Proton acceptor.

It belongs to the transferase hexapeptide repeat family. LpxD subfamily. Homotrimer.

The enzyme catalyses a UDP-3-O-[(3R)-3-hydroxyacyl]-alpha-D-glucosamine + a (3R)-hydroxyacyl-[ACP] = a UDP-2-N,3-O-bis[(3R)-3-hydroxyacyl]-alpha-D-glucosamine + holo-[ACP] + H(+). The protein operates within bacterial outer membrane biogenesis; LPS lipid A biosynthesis. Catalyzes the N-acylation of UDP-3-O-acylglucosamine using 3-hydroxyacyl-ACP as the acyl donor. Is involved in the biosynthesis of lipid A, a phosphorylated glycolipid that anchors the lipopolysaccharide to the outer membrane of the cell. This is UDP-3-O-acylglucosamine N-acyltransferase from Herminiimonas arsenicoxydans.